The sequence spans 436 residues: tRNA-2-methylthio-N(6)-dimethylallyladenosine synthase (436 aa).

Residues 5–121 (RKLFIKTYGC…LPDMLDRTEG (117 aa)) enclose the MTTase N-terminal domain. Residues Cys-14, Cys-50, Cys-84, Cys-158, Cys-162, and Cys-165 each coordinate [4Fe-4S] cluster. The region spanning 144 to 374 (ATRGPAAFLT…TEQQRAAQMA (231 aa)) is the Radical SAM core domain. In terms of domain architecture, TRAM spans 373–435 (MAMVGREVGV…PNSLAGERLG (63 aa)).

It belongs to the methylthiotransferase family. MiaB subfamily. Monomer. [4Fe-4S] cluster is required as a cofactor.

The protein localises to the cytoplasm. The enzyme catalyses N(6)-dimethylallyladenosine(37) in tRNA + (sulfur carrier)-SH + AH2 + 2 S-adenosyl-L-methionine = 2-methylsulfanyl-N(6)-dimethylallyladenosine(37) in tRNA + (sulfur carrier)-H + 5'-deoxyadenosine + L-methionine + A + S-adenosyl-L-homocysteine + 2 H(+). Catalyzes the methylthiolation of N6-(dimethylallyl)adenosine (i(6)A), leading to the formation of 2-methylthio-N6-(dimethylallyl)adenosine (ms(2)i(6)A) at position 37 in tRNAs that read codons beginning with uridine. The protein is tRNA-2-methylthio-N(6)-dimethylallyladenosine synthase of Cereibacter sphaeroides (strain ATCC 17029 / ATH 2.4.9) (Rhodobacter sphaeroides).